Reading from the N-terminus, the 122-residue chain is UPF0102 protein RL0336 (122 aa).

It belongs to the UPF0102 family.

This chain is UPF0102 protein RL0336, found in Rhizobium johnstonii (strain DSM 114642 / LMG 32736 / 3841) (Rhizobium leguminosarum bv. viciae).